Reading from the N-terminus, the 88-residue chain is Small ribosomal subunit protein uS15 (88 aa).

This sequence belongs to the universal ribosomal protein uS15 family. Part of the 30S ribosomal subunit. Forms a bridge to the 50S subunit in the 70S ribosome, contacting the 23S rRNA.

One of the primary rRNA binding proteins, it binds directly to 16S rRNA where it helps nucleate assembly of the platform of the 30S subunit by binding and bridging several RNA helices of the 16S rRNA. Functionally, forms an intersubunit bridge (bridge B4) with the 23S rRNA of the 50S subunit in the ribosome. In Opitutus terrae (strain DSM 11246 / JCM 15787 / PB90-1), this protein is Small ribosomal subunit protein uS15.